The primary structure comprises 390 residues: 8-amino-7-oxononanoate synthase (390 aa).

Arg20 provides a ligand contact to substrate. 107-108 (GF) contacts pyridoxal 5'-phosphate. A substrate-binding site is contributed by His132. Pyridoxal 5'-phosphate-binding positions include Ser179, 204–207 (DDAH), and 235–238 (TLSK). N6-(pyridoxal phosphate)lysine is present on Lys238. Thr352 serves as a coordination point for substrate.

Belongs to the class-II pyridoxal-phosphate-dependent aminotransferase family. BioF subfamily. As to quaternary structure, homodimer. It depends on pyridoxal 5'-phosphate as a cofactor.

The catalysed reaction is 6-carboxyhexanoyl-[ACP] + L-alanine + H(+) = (8S)-8-amino-7-oxononanoate + holo-[ACP] + CO2. Its pathway is cofactor biosynthesis; biotin biosynthesis. Functionally, catalyzes the decarboxylative condensation of pimeloyl-[acyl-carrier protein] and L-alanine to produce 8-amino-7-oxononanoate (AON), [acyl-carrier protein], and carbon dioxide. In Exiguobacterium sibiricum (strain DSM 17290 / CCUG 55495 / CIP 109462 / JCM 13490 / 255-15), this protein is 8-amino-7-oxononanoate synthase.